A 101-amino-acid chain; its full sequence is Apolipoprotein C-II (101 aa).

Positions 1 to 17 are cleaved as a signal peptide; that stretch reads MGTRFLLALCLVLLVLG. A lipid binding region spans residues 66 to 74; the sequence is AVDEKLRDL. A lipoprotein lipase cofactor region spans residues 78 to 101; it reads STAAMSTYTGIFTDQVLSVLKGEE.

This sequence belongs to the apolipoprotein C2 family. Proapolipoprotein C-II is synthesized as a sialic acid containing glycoprotein which is subsequently desialylated prior to its proteolytic processing. In terms of processing, proapolipoprotein C-II, the major form found in plasma undergoes proteolytic cleavage of its N-terminal hexapeptide to generate apolipoprotein C-II, which occurs as the minor form in plasma.

The protein localises to the secreted. Its function is as follows. Component of chylomicrons, very low-density lipoproteins (VLDL), low-density lipoproteins (LDL), and high-density lipoproteins (HDL) in plasma. Plays an important role in lipoprotein metabolism as an activator of lipoprotein lipase. Both proapolipoprotein C-II and apolipoprotein C-II can activate lipoprotein lipase. This Chlorocebus sabaeus (Green monkey) protein is Apolipoprotein C-II (APOC2).